Reading from the N-terminus, the 184-residue chain is Photosystem I assembly protein Ycf4 (184 aa).

The next 2 membrane-spanning stretches (helical) occupy residues 22–42 (FFWA…GTSS) and 57–77 (IIFF…LFIS).

This sequence belongs to the Ycf4 family.

It localises to the plastid. The protein resides in the chloroplast thylakoid membrane. Its function is as follows. Seems to be required for the assembly of the photosystem I complex. This Aethionema grandiflorum (Persian stone-cress) protein is Photosystem I assembly protein Ycf4.